The chain runs to 801 residues: Probable phosphoketolase (801 aa).

It belongs to the XFP family. Thiamine diphosphate is required as a cofactor.

This chain is Probable phosphoketolase, found in Bradyrhizobium diazoefficiens (strain JCM 10833 / BCRC 13528 / IAM 13628 / NBRC 14792 / USDA 110).